The primary structure comprises 500 residues: Endothelial lipase (500 aa).

The signal sequence occupies residues 1–20; it reads MRNTVFLLGFWSVYCYFPAG. Cys64 and Cys77 form a disulfide bridge. Asn65, Asn80, and Asn136 each carry an N-linked (GlcNAc...) asparagine glycan. Ser169 (nucleophile) is an active-site residue. Asp193 (charge relay system) is an active-site residue. Residues Cys252 and Cys272 are joined by a disulfide bond. The active-site Charge relay system is His274. 2 disulfides stabilise this stretch: Cys297–Cys316 and Cys308–Cys311. 325–337 lines the heparin pocket; sequence KMRKKRNSKMYLK. In terms of domain architecture, PLAT spans 347 to 482; the sequence is YHYQLKVHMF…SPGQELWFHK (136 aa). N-linked (GlcNAc...) asparagine glycans are attached at residues Asn359 and Asn393. A disulfide bridge links Cys463 with Cys483. N-linked (GlcNAc...) asparagine glycosylation is present at Asn491.

It belongs to the AB hydrolase superfamily. Lipase family. In terms of assembly, head to tail homodimer. As to expression, expressed in placenta, lung, liver, testis and spleen.

The protein resides in the secreted. It carries out the reaction a triacylglycerol + H2O = a diacylglycerol + a fatty acid + H(+). The enzyme catalyses a 1,2-diacyl-sn-glycero-3-phosphocholine + H2O = a 2-acyl-sn-glycero-3-phosphocholine + a fatty acid + H(+). It catalyses the reaction 1,2,3-tri-(9Z-octadecenoyl)-glycerol + H2O = di-(9Z)-octadecenoylglycerol + (9Z)-octadecenoate + H(+). The catalysed reaction is 1,2,3-tributanoylglycerol + H2O = dibutanoylglycerol + butanoate + H(+). It carries out the reaction 1,2-dihexadecanoyl-sn-glycero-3-phosphocholine + H2O = hexadecanoyl-sn-glycero-3-phosphocholine + hexadecanoate + H(+). Exerts both phospholipase and triglyceride lipase activities. More active as a phospholipase than a triglyceride lipase. Hydrolyzes triglycerides, both with short-chain fatty acyl groups (tributyrin) and long-chain fatty acyl groups (triolein) with similar levels of activity toward both types of substrates. Hydrolyzes high density lipoproteins (HDL) more efficiently than other lipoproteins. In Mus musculus (Mouse), this protein is Endothelial lipase (Lipg).